The sequence spans 240 residues: 4-hydroxy-tetrahydrodipicolinate reductase (240 aa).

Residues 79–81 (ATT) and 103–106 (SANM) each bind NAD(+). The Proton donor/acceptor role is filled by histidine 135. Histidine 136 provides a ligand contact to (S)-2,3,4,5-tetrahydrodipicolinate. Lysine 139 serves as the catalytic Proton donor. 145–146 (GT) provides a ligand contact to (S)-2,3,4,5-tetrahydrodipicolinate.

The protein belongs to the DapB family.

Its subcellular location is the cytoplasm. The catalysed reaction is (S)-2,3,4,5-tetrahydrodipicolinate + NAD(+) + H2O = (2S,4S)-4-hydroxy-2,3,4,5-tetrahydrodipicolinate + NADH + H(+). The enzyme catalyses (S)-2,3,4,5-tetrahydrodipicolinate + NADP(+) + H2O = (2S,4S)-4-hydroxy-2,3,4,5-tetrahydrodipicolinate + NADPH + H(+). It functions in the pathway amino-acid biosynthesis; L-lysine biosynthesis via DAP pathway; (S)-tetrahydrodipicolinate from L-aspartate: step 4/4. Functionally, catalyzes the conversion of 4-hydroxy-tetrahydrodipicolinate (HTPA) to tetrahydrodipicolinate. The chain is 4-hydroxy-tetrahydrodipicolinate reductase from Staphylococcus aureus (strain bovine RF122 / ET3-1).